Here is a 246-residue protein sequence, read N- to C-terminus: E3 ubiquitin-protein ligase MARCHF2 (246 aa).

An RING-CH-type zinc finger spans residues 56-116 (GTQSDGPICR…ELCHTEFAVE (61 aa)). Residues cysteine 64, cysteine 67, cysteine 80, cysteine 82, histidine 90, cysteine 93, cysteine 106, and cysteine 109 each contribute to the Zn(2+) site. 2 helical membrane-spanning segments follow: residues 138–158 (LFCD…SGWL) and 175–195 (AVGL…WTLV).

It localises to the endoplasmic reticulum membrane. The protein localises to the lysosome membrane. The protein resides in the endosome membrane. It catalyses the reaction S-ubiquitinyl-[E2 ubiquitin-conjugating enzyme]-L-cysteine + [acceptor protein]-L-lysine = [E2 ubiquitin-conjugating enzyme]-L-cysteine + N(6)-ubiquitinyl-[acceptor protein]-L-lysine.. The protein operates within protein modification; protein ubiquitination. Functionally, E3 ubiquitin-protein ligase which may be involved in endosomal trafficking. E3 ubiquitin ligases accept ubiquitin from an E2 ubiquitin-conjugating enzyme in the form of a thioester and then directly transfer the ubiquitin to targeted substrates. The sequence is that of E3 ubiquitin-protein ligase MARCHF2 (marchf2) from Xenopus laevis (African clawed frog).